Reading from the N-terminus, the 256-residue chain is Thiazole synthase (256 aa).

The active-site Schiff-base intermediate with DXP is Lys-96. Residues Gly-157, 184 to 185 (AG), and 206 to 207 (NT) each bind 1-deoxy-D-xylulose 5-phosphate.

It belongs to the ThiG family. As to quaternary structure, homotetramer. Forms heterodimers with either ThiH or ThiS.

It localises to the cytoplasm. The enzyme catalyses [ThiS sulfur-carrier protein]-C-terminal-Gly-aminoethanethioate + 2-iminoacetate + 1-deoxy-D-xylulose 5-phosphate = [ThiS sulfur-carrier protein]-C-terminal Gly-Gly + 2-[(2R,5Z)-2-carboxy-4-methylthiazol-5(2H)-ylidene]ethyl phosphate + 2 H2O + H(+). It participates in cofactor biosynthesis; thiamine diphosphate biosynthesis. Catalyzes the rearrangement of 1-deoxy-D-xylulose 5-phosphate (DXP) to produce the thiazole phosphate moiety of thiamine. Sulfur is provided by the thiocarboxylate moiety of the carrier protein ThiS. In vitro, sulfur can be provided by H(2)S. The protein is Thiazole synthase of Roseobacter denitrificans (strain ATCC 33942 / OCh 114) (Erythrobacter sp. (strain OCh 114)).